Consider the following 127-residue polypeptide: Small ribosomal subunit protein uS11 (127 aa).

It belongs to the universal ribosomal protein uS11 family. In terms of assembly, part of the 30S ribosomal subunit. Interacts with proteins S7 and S18. Binds to IF-3.

Functionally, located on the platform of the 30S subunit, it bridges several disparate RNA helices of the 16S rRNA. Forms part of the Shine-Dalgarno cleft in the 70S ribosome. In Streptococcus gordonii (strain Challis / ATCC 35105 / BCRC 15272 / CH1 / DL1 / V288), this protein is Small ribosomal subunit protein uS11.